A 260-amino-acid polypeptide reads, in one-letter code: Pro-opiomelanocortin (260 aa).

The signal sequence occupies residues 1-25 (MLQPVWSCILALLGVFIFHVGEVRS). Gln26 bears the Pyrrolidone carboxylic acid mark. Position 86 is a phenylalanine amide (Phe86). An N-linked (GlcNAc...) asparagine glycan is attached at Asn90. Residues 104–138 (EDIANYPILNLLTGSDNQNTQQGIMEDEAVDRQDS) constitute a propeptide that is removed on maturation. A Valine amide modification is found at Val153.

Belongs to the POMC family. Specific enzymatic cleavages at paired basic residues yield the different active peptides.

It localises to the secreted. In terms of biological role, stimulates the adrenal glands to release cortisol. Its function is as follows. Anorexigenic peptide. Increases the pigmentation of skin by increasing melanin production in melanocytes. Functionally, increases the pigmentation of skin by increasing melanin production in melanocytes. Endogenous orexigenic opiate. In terms of biological role, endogenous opiate. The polypeptide is Pro-opiomelanocortin (pomc) (Pelophylax ridibundus (Marsh frog)).